The chain runs to 179 residues: ATP-dependent protease subunit HslV (179 aa).

Threonine 7 is a catalytic residue. Na(+)-binding residues include glycine 162, cysteine 165, and threonine 168.

The protein belongs to the peptidase T1B family. HslV subfamily. As to quaternary structure, a double ring-shaped homohexamer of HslV is capped on each side by a ring-shaped HslU homohexamer. The assembly of the HslU/HslV complex is dependent on binding of ATP.

Its subcellular location is the cytoplasm. The catalysed reaction is ATP-dependent cleavage of peptide bonds with broad specificity.. Allosterically activated by HslU binding. Protease subunit of a proteasome-like degradation complex believed to be a general protein degrading machinery. This is ATP-dependent protease subunit HslV from Aromatoleum aromaticum (strain DSM 19018 / LMG 30748 / EbN1) (Azoarcus sp. (strain EbN1)).